Here is a 269-residue protein sequence, read N- to C-terminus: Hdr-like menaquinol oxidoreductase iron-sulfur subunit 1 (269 aa).

The segment at residues 1-26 (MMSRRKFLLLTGAAAAGAILTPQISA) is a signal peptide (tat-type signal). The [4Fe-4S] cluster site is built by C52, C55, C72, C76, C118, C121, C126, C130, C150, C153, C156, C160, C194, C197, C215, and C219. Residues 141–170 (GIVEIDMHRCIGCRYCMIACPYGARCFNFI) form the 4Fe-4S ferredoxin-type domain.

As to quaternary structure, consists of five subunits: an integral membrane subunit, a cytochrome b-like subunit, a cytochrome c subunit and two iron-sulfur subunits. [4Fe-4S] cluster serves as cofactor. Predicted to be exported by the Tat system. The position of the signal peptide cleavage has been experimentally proven.

It is found in the cell membrane. In terms of biological role, has menaquinol-oxidizing activity. HmeA, HmeB and HmeE subunits may together catalyze electron transfer from menaquinol to cytochrome c. The sequence is that of Hdr-like menaquinol oxidoreductase iron-sulfur subunit 1 (hmeA) from Archaeoglobus fulgidus (strain ATCC 49558 / DSM 4304 / JCM 9628 / NBRC 100126 / VC-16).